A 200-amino-acid polypeptide reads, in one-letter code: Large ribosomal subunit protein uL4 (200 aa).

Residues 44 to 70 (AQKTRAEVTGSGKKPWRQKGTGRARSG) form a disordered region.

Belongs to the universal ribosomal protein uL4 family. In terms of assembly, part of the 50S ribosomal subunit.

One of the primary rRNA binding proteins, this protein initially binds near the 5'-end of the 23S rRNA. It is important during the early stages of 50S assembly. It makes multiple contacts with different domains of the 23S rRNA in the assembled 50S subunit and ribosome. In terms of biological role, protein L4 is a both a transcriptional repressor and a translational repressor protein. It regulates transcription of the S10 operon (to which L4 belongs) by causing premature termination of transcription within the S10 leader. L4 controls the translation of the S10 operon by binding to its mRNA. Functionally, this protein when expressed in E.coli represses both transcription and translation of the endogenous S10 operon. As the M.morganii S10 leader can be regulated in vitro by the E.coli L4 protein this strongly suggests the endogenous protein controls its own S10 operon in a similar fashion. Its function is as follows. Forms part of the polypeptide exit tunnel. The sequence is that of Large ribosomal subunit protein uL4 (rplD) from Morganella morganii (Proteus morganii).